We begin with the raw amino-acid sequence, 392 residues long: ER-bound oxygenase mpaB (392 aa).

The Lumenal segment spans residues 1–21 (MSLPLPPALSELARALPYSRT). A helical transmembrane segment spans residues 22-41 (QWLPIFVGFLIGYPILIRAL). Topologically, residues 42-392 (RYKRHGEMKK…WSKYHATTND (351 aa)) are cytoplasmic. Residues 352-376 (DLGQKKGPQGDPGNDEGIKDLKDGE) are disordered. A compositionally biased stretch (basic and acidic residues) spans 367-376 (EGIKDLKDGE).

The protein belongs to the mpaB oxygenase family.

The protein localises to the endoplasmic reticulum membrane. The enzyme catalyses 4-farnesyl-3,5-dihydroxy-6-methylphthalide + AH2 + 2 O2 = (4E,8E)-10-(4,6-dihydroxy-7-methyl-3-oxo-1,3-dihydro-2-benzofuran-5-yl)-4,8-dimethyldeca-4,8-dienoate + acetone + A + H2O + H(+). The protein operates within secondary metabolite biosynthesis; terpenoid biosynthesis. ER-bound oxygenase; part of the gene cluster that mediates the biosynthesis of mycophenolic acid (MPA), the first isolated antibiotic natural product in the world obtained from a culture of Penicillium brevicompactum in 1893. MpaB catalyzes the oxidative cleavage the C19-C20 double bond in farnesyl-DHMP (FDHMP) to yield FDHMP-3C via a mycophenolic aldehyde intermediate. The first step of the pathway is the synthesis of 5-methylorsellinic acid (5MOA) by the cytosolic polyketide synthase mpaC. 5MOA is then converted to the phthalide compound 5,7-dihydroxy-4,6-dimethylphthalide (DHMP) by the endoplasmic reticulum-bound cytochrome P450 monooxygenase mpaDE. MpaDE first catalyzes hydroxylation of 5-MOA to 4,6-dihydroxy-2-(hydroxymethyl)-3-methylbenzoic acid (DHMB). MpaDE then acts as a lactone synthase that catalyzes the ring closure to convert DHMB into DHMP. The next step is the prenylation of DHMP by the Golgi apparatus-associated prenyltransferase mpaA to yield farnesyl-DHMP (FDHMP). The ER-bound oxygenase mpaB then mediates the oxidative cleavage the C19-C20 double bond in FDHMP to yield FDHMP-3C via a mycophenolic aldehyde intermediate. The O-methyltransferase mpaG catalyzes the methylation of FDHMP-3C to yield MFDHMP-3C. After the cytosolic methylation of FDHMP-3C, MFDHMP-3C enters into peroxisomes probably via free diffusion due to its low molecular weight. Upon a peroxisomal CoA ligation reaction, catalyzed by a beta-oxidation component enzyme acyl-CoA ligase ACL891, MFDHMP-3C-CoA would then be restricted to peroxisomes for the following beta-oxidation pathway steps. The peroxisomal beta-oxidation machinery than converts MFDHMP-3C-CoA into MPA_CoA, via a beta-oxidation chain-shortening process. Finally mpaH acts as a peroxisomal acyl-CoA hydrolase with high substrate specificity toward MPA-CoA to release the final product MPA. In Penicillium brevicompactum, this protein is ER-bound oxygenase mpaB.